A 159-amino-acid polypeptide reads, in one-letter code: Probable GPI-anchored protein ANS1 (159 aa).

The N-terminal stretch at 1-20 (MKCTLVSTLFAITNILVAHA) is a signal peptide. Residues 101 to 114 (AAISQISDGQIQAT) form a PIR1/2/3 repeat. Gly137 carries the GPI-anchor amidated glycine lipid modification. A propeptide spans 138 to 159 (AGMKVESKNMGYIVGVAALLFL) (removed in mature form).

It localises to the cell membrane. This chain is Probable GPI-anchored protein ANS1 (ANS1), found in Saccharomyces cerevisiae (strain ATCC 204508 / S288c) (Baker's yeast).